We begin with the raw amino-acid sequence, 343 residues long: Heat-inducible transcription repressor HrcA (343 aa).

This sequence belongs to the HrcA family.

In terms of biological role, negative regulator of class I heat shock genes (grpE-dnaK-dnaJ and groELS operons). Prevents heat-shock induction of these operons. The protein is Heat-inducible transcription repressor HrcA of Clostridium botulinum (strain Alaska E43 / Type E3).